The sequence spans 360 residues: Peptide chain release factor 1 (360 aa).

Gln-235 bears the N5-methylglutamine mark. The segment at 284-313 is disordered; the sequence is AKRQQAEASTRRNLLGSGDRSDRNRTYNFP.

It belongs to the prokaryotic/mitochondrial release factor family. In terms of processing, methylated by PrmC. Methylation increases the termination efficiency of RF1.

It localises to the cytoplasm. Its function is as follows. Peptide chain release factor 1 directs the termination of translation in response to the peptide chain termination codons UAG and UAA. The protein is Peptide chain release factor 1 of Citrobacter koseri (strain ATCC BAA-895 / CDC 4225-83 / SGSC4696).